Consider the following 161-residue polypeptide: 3-hydroxyacyl-[acyl-carrier-protein] dehydratase FabZ (161 aa).

Histidine 55 is an active-site residue.

The protein belongs to the thioester dehydratase family. FabZ subfamily.

Its subcellular location is the cytoplasm. The enzyme catalyses a (3R)-hydroxyacyl-[ACP] = a (2E)-enoyl-[ACP] + H2O. Involved in unsaturated fatty acids biosynthesis. Catalyzes the dehydration of short chain beta-hydroxyacyl-ACPs and long chain saturated and unsaturated beta-hydroxyacyl-ACPs. In Jannaschia sp. (strain CCS1), this protein is 3-hydroxyacyl-[acyl-carrier-protein] dehydratase FabZ.